A 1057-amino-acid polypeptide reads, in one-letter code: Carbamoyl phosphate synthase large chain (1057 aa).

A carboxyphosphate synthetic domain region spans residues 1–401 (MPKNKDINTI…SLLKAIRSLE (401 aa)). 12 residues coordinate ATP: arginine 129, arginine 169, glycine 175, glycine 176, lysine 208, isoleucine 210, glutamate 215, glycine 241, isoleucine 242, histidine 243, glutamine 284, and glutamate 298. In terms of domain architecture, ATP-grasp 1 spans 133–327 (RSLMNELDVP…IAKLAAKIAV (195 aa)). Glutamine 284, glutamate 298, and asparagine 300 together coordinate Mg(2+). Positions 284, 298, and 300 each coordinate Mn(2+). Residues 402–546 (YGVHHLGLPN…YGTYERDNES (145 aa)) form an oligomerization domain region. Positions 547–929 (VVTDKEKVIV…ALFKGLTASG (383 aa)) are carbamoyl phosphate synthetic domain. The ATP-grasp 2 domain maps to 671–861 (EALLNKIDVP…MAQLAMRAIL (191 aa)). The ATP site is built by arginine 707, arginine 746, leucine 748, glutamate 752, glycine 777, valine 778, histidine 779, serine 780, glutamine 820, and glutamate 832. The Mg(2+) site is built by glutamine 820, glutamate 832, and asparagine 834. The Mn(2+) site is built by glutamine 820, glutamate 832, and asparagine 834. The MGS-like domain maps to 930 to 1057 (VEVKDHGTVL…ESMSFTMKQM (128 aa)). An allosteric domain region spans residues 930 to 1057 (VEVKDHGTVL…ESMSFTMKQM (128 aa)).

The protein belongs to the CarB family. Composed of two chains; the small (or glutamine) chain promotes the hydrolysis of glutamine to ammonia, which is used by the large (or ammonia) chain to synthesize carbamoyl phosphate. Tetramer of heterodimers (alpha,beta)4. Mg(2+) is required as a cofactor. It depends on Mn(2+) as a cofactor.

The catalysed reaction is hydrogencarbonate + L-glutamine + 2 ATP + H2O = carbamoyl phosphate + L-glutamate + 2 ADP + phosphate + 2 H(+). It catalyses the reaction hydrogencarbonate + NH4(+) + 2 ATP = carbamoyl phosphate + 2 ADP + phosphate + 2 H(+). The protein operates within amino-acid biosynthesis; L-arginine biosynthesis; carbamoyl phosphate from bicarbonate: step 1/1. Its pathway is pyrimidine metabolism; UMP biosynthesis via de novo pathway; (S)-dihydroorotate from bicarbonate: step 1/3. Functionally, large subunit of the glutamine-dependent carbamoyl phosphate synthetase (CPSase). CPSase catalyzes the formation of carbamoyl phosphate from the ammonia moiety of glutamine, carbonate, and phosphate donated by ATP, constituting the first step of 2 biosynthetic pathways, one leading to arginine and/or urea and the other to pyrimidine nucleotides. The large subunit (synthetase) binds the substrates ammonia (free or transferred from glutamine from the small subunit), hydrogencarbonate and ATP and carries out an ATP-coupled ligase reaction, activating hydrogencarbonate by forming carboxy phosphate which reacts with ammonia to form carbamoyl phosphate. The polypeptide is Carbamoyl phosphate synthase large chain (Staphylococcus carnosus (strain TM300)).